Reading from the N-terminus, the 422-residue chain is Ameloblastin (422 aa).

A signal peptide spans 1 to 26 (MSASKIPLFKMKGLLLFLSLVKMSLA). Hydroxyproline is present on Pro42. Ser48 carries the phosphoserine modification. Ser117 carries O-linked (GalNAc...) serine glycosylation. The disordered stretch occupies residues 271 to 321 (GLNQNSPKGGDFTVEVDSPVSVTKGPEKGEGPEGSPLQEASPDKGENPALL).

This sequence belongs to the ameloblastin family. Ameloblast-specific.

The protein resides in the secreted. It localises to the extracellular space. It is found in the extracellular matrix. Involved in the mineralization and structural organization of enamel. The sequence is that of Ameloblastin (Ambn) from Rattus norvegicus (Rat).